A 276-amino-acid polypeptide reads, in one-letter code: Rhomboid protease GlpG (276 aa).

6 helical membrane passes run Gly94–Ile114, Ile142–Gly162, Leu169–Gln189, Phe192–Trp212, Leu229–Met249, and Ala250–Leu270. Ser201 functions as the Nucleophile in the catalytic mechanism. His254 is a catalytic residue.

This sequence belongs to the peptidase S54 family.

The protein resides in the cell inner membrane. The enzyme catalyses Cleaves type-1 transmembrane domains using a catalytic dyad composed of serine and histidine that are contributed by different transmembrane domains.. In terms of biological role, rhomboid-type serine protease that catalyzes intramembrane proteolysis. This Salmonella paratyphi A (strain ATCC 9150 / SARB42) protein is Rhomboid protease GlpG.